The following is a 242-amino-acid chain: 1-(5-phosphoribosyl)-5-[(5-phosphoribosylamino)methylideneamino] imidazole-4-carboxamide isomerase (242 aa).

Aspartate 10 acts as the Proton acceptor in catalysis. Aspartate 132 (proton donor) is an active-site residue.

This sequence belongs to the HisA/HisF family.

It localises to the cytoplasm. The catalysed reaction is 1-(5-phospho-beta-D-ribosyl)-5-[(5-phospho-beta-D-ribosylamino)methylideneamino]imidazole-4-carboxamide = 5-[(5-phospho-1-deoxy-D-ribulos-1-ylimino)methylamino]-1-(5-phospho-beta-D-ribosyl)imidazole-4-carboxamide. Its pathway is amino-acid biosynthesis; L-histidine biosynthesis; L-histidine from 5-phospho-alpha-D-ribose 1-diphosphate: step 4/9. This Streptococcus sanguinis (strain SK36) protein is 1-(5-phosphoribosyl)-5-[(5-phosphoribosylamino)methylideneamino] imidazole-4-carboxamide isomerase.